Reading from the N-terminus, the 374-residue chain is tRNA-specific 2-thiouridylase MnmA (374 aa).

Residues 15–22 and M41 contribute to the ATP site; that span reads GMSGGVDS. The interaction with target base in tRNA stretch occupies residues 101-103; that stretch reads NPD. The active-site Nucleophile is the C106. C106 and C203 form a disulfide bridge. G130 serves as a coordination point for ATP. Positions 153 to 155 are interaction with tRNA; sequence KDQ. Catalysis depends on C203, which acts as the Cysteine persulfide intermediate. The segment at 311–312 is interaction with tRNA; it reads RY.

The protein belongs to the MnmA/TRMU family.

Its subcellular location is the cytoplasm. The catalysed reaction is S-sulfanyl-L-cysteinyl-[protein] + uridine(34) in tRNA + AH2 + ATP = 2-thiouridine(34) in tRNA + L-cysteinyl-[protein] + A + AMP + diphosphate + H(+). Functionally, catalyzes the 2-thiolation of uridine at the wobble position (U34) of tRNA, leading to the formation of s(2)U34. The polypeptide is tRNA-specific 2-thiouridylase MnmA (Lysinibacillus sphaericus (strain C3-41)).